A 520-amino-acid chain; its full sequence is Legumin A2 (520 aa).

A signal peptide spans Met1–Ala22. 2 disulfides stabilise this stretch: Cys32–Cys65 and Cys108–Cys342. In terms of domain architecture, Cupin type-1 1 spans Leu37 to Asp233. Positions Val250–Glu339 are disordered. One can recognise a Cupin type-1 2 domain in the interval Leu348 to Arg497.

This sequence belongs to the 11S seed storage protein (globulins) family. In terms of assembly, hexamer; each subunit is composed of an acidic and a basic chain derived from a single precursor and linked by a disulfide bond.

Functionally, this protein found in the seeds of many leguminous and non-leguminous plants is the source of sulfur-containing amino acids in seed meals. This Pisum sativum (Garden pea) protein is Legumin A2 (LEGA2).